The primary structure comprises 188 residues: Inner membrane-spanning protein YciB (188 aa).

5 helical membrane passes run 23–43 (FQKA…IGYA), 49–69 (AMLP…GLIF), 73–93 (VFVK…LVGG), 116–133 (WRTL…VAII), and 149–169 (FRLA…PFMM).

This sequence belongs to the YciB family.

It localises to the cell inner membrane. Plays a role in cell envelope biogenesis, maintenance of cell envelope integrity and membrane homeostasis. The sequence is that of Inner membrane-spanning protein YciB from Caulobacter vibrioides (strain ATCC 19089 / CIP 103742 / CB 15) (Caulobacter crescentus).